Consider the following 268-residue polypeptide: MQVIIFDNAQQVAENAAEWVAELINKKSNPVLGLATGSTPISLYQELVNKYKAGELSFSNTTSFNLDEYLGINEKNQQSYRHFMNENLFNHVDINKLKTFLPTCNQGENPREQGLDYEDKIAQAGGIDLQILGIGANGHIGFNEPTSSLASRTRIKTLTQQTLNDNSRLFAADEFQPTLAMTMGIATILDARYVLLMATGKSKAKAVKEMVTGPLSAVCPASSLQLHENAIVLLDKEAASELEDHEYYVWADKQNVKINQEFGLYHNY.

D67 (proton acceptor; for enolization step) is an active-site residue. Catalysis depends on N137, which acts as the For ring-opening step. The Proton acceptor; for ring-opening step role is filled by H139. The For ring-opening step role is filled by E144.

It belongs to the glucosamine/galactosamine-6-phosphate isomerase family. NagB subfamily. Homohexamer.

The catalysed reaction is alpha-D-glucosamine 6-phosphate + H2O = beta-D-fructose 6-phosphate + NH4(+). It functions in the pathway amino-sugar metabolism; N-acetylneuraminate degradation; D-fructose 6-phosphate from N-acetylneuraminate: step 5/5. Functionally, catalyzes the reversible isomerization-deamination of glucosamine 6-phosphate (GlcN6P) to form fructose 6-phosphate (Fru6P) and ammonium ion. This is Glucosamine-6-phosphate deaminase from Colwellia psychrerythraea (strain 34H / ATCC BAA-681) (Vibrio psychroerythus).